The chain runs to 341 residues: L-threonine 3-dehydrogenase (341 aa).

Cysteine 38 serves as a coordination point for Zn(2+). Catalysis depends on charge relay system residues threonine 40 and histidine 43. 6 residues coordinate Zn(2+): histidine 63, glutamate 64, cysteine 93, cysteine 96, cysteine 99, and cysteine 107. NAD(+) contacts are provided by residues isoleucine 175, aspartate 195, arginine 200, leucine 262 to isoleucine 264, and isoleucine 286 to tyrosine 287.

It belongs to the zinc-containing alcohol dehydrogenase family. Homotetramer. Zn(2+) is required as a cofactor.

It is found in the cytoplasm. It carries out the reaction L-threonine + NAD(+) = (2S)-2-amino-3-oxobutanoate + NADH + H(+). It functions in the pathway amino-acid degradation; L-threonine degradation via oxydo-reductase pathway; glycine from L-threonine: step 1/2. Catalyzes the NAD(+)-dependent oxidation of L-threonine to 2-amino-3-ketobutyrate. This is L-threonine 3-dehydrogenase from Escherichia coli O17:K52:H18 (strain UMN026 / ExPEC).